The chain runs to 418 residues: Glutamyl-tRNA reductase (418 aa).

Substrate is bound by residues 49 to 52 (TCNR), Ser-107, 112 to 114 (EPQ), and Gln-118. Cys-50 (nucleophile) is an active-site residue. Residue 187-192 (GAGETI) coordinates NADP(+).

The protein belongs to the glutamyl-tRNA reductase family. As to quaternary structure, homodimer.

It catalyses the reaction (S)-4-amino-5-oxopentanoate + tRNA(Glu) + NADP(+) = L-glutamyl-tRNA(Glu) + NADPH + H(+). It participates in porphyrin-containing compound metabolism; protoporphyrin-IX biosynthesis; 5-aminolevulinate from L-glutamyl-tRNA(Glu): step 1/2. Catalyzes the NADPH-dependent reduction of glutamyl-tRNA(Glu) to glutamate 1-semialdehyde (GSA). This Aeromonas salmonicida (strain A449) protein is Glutamyl-tRNA reductase.